We begin with the raw amino-acid sequence, 97 residues long: Large ribosomal subunit protein bL28 (97 aa).

This sequence belongs to the bacterial ribosomal protein bL28 family.

The polypeptide is Large ribosomal subunit protein bL28 (Rickettsia canadensis (strain McKiel)).